The primary structure comprises 25 residues: U11-ctenitoxin-Co1b (25 aa).

Intrachain disulfides connect Cys-4–Cys-18 and Cys-11–Cys-22.

Monomer. As to expression, expressed by the venom gland.

The protein resides in the secreted. Neurotoxin. This Ctenus ornatus (Brazilian spider) protein is U11-ctenitoxin-Co1b.